The primary structure comprises 436 residues: Glutamate-1-semialdehyde 2,1-aminomutase (436 aa).

At lysine 269 the chain carries N6-(pyridoxal phosphate)lysine.

It belongs to the class-III pyridoxal-phosphate-dependent aminotransferase family. HemL subfamily. In terms of assembly, homodimer. Pyridoxal 5'-phosphate is required as a cofactor.

The protein resides in the cytoplasm. The catalysed reaction is (S)-4-amino-5-oxopentanoate = 5-aminolevulinate. Its pathway is porphyrin-containing compound metabolism; protoporphyrin-IX biosynthesis; 5-aminolevulinate from L-glutamyl-tRNA(Glu): step 2/2. The protein operates within porphyrin-containing compound metabolism; chlorophyll biosynthesis. In Heliobacterium modesticaldum (strain ATCC 51547 / Ice1), this protein is Glutamate-1-semialdehyde 2,1-aminomutase.